The primary structure comprises 566 residues: DNA ligase B (566 aa).

Lys125 functions as the N6-AMP-lysine intermediate in the catalytic mechanism.

It belongs to the NAD-dependent DNA ligase family. LigB subfamily.

The enzyme catalyses NAD(+) + (deoxyribonucleotide)n-3'-hydroxyl + 5'-phospho-(deoxyribonucleotide)m = (deoxyribonucleotide)n+m + AMP + beta-nicotinamide D-nucleotide.. Its function is as follows. Catalyzes the formation of phosphodiester linkages between 5'-phosphoryl and 3'-hydroxyl groups in double-stranded DNA using NAD as a coenzyme and as the energy source for the reaction. In Pseudomonas putida (strain ATCC 700007 / DSM 6899 / JCM 31910 / BCRC 17059 / LMG 24140 / F1), this protein is DNA ligase B.